The chain runs to 466 residues: Fumarate hydratase class II (466 aa).

Substrate is bound by residues Ser-99–Thr-101, His-129–Asp-132, Ser-139–Asn-141, and Thr-187. His-188 functions as the Proton donor/acceptor in the catalytic mechanism. Ser-318 is a catalytic residue. Substrate contacts are provided by residues Ser-319 and Lys-324 to Asn-326.

Belongs to the class-II fumarase/aspartase family. Fumarase subfamily. As to quaternary structure, homotetramer.

The protein resides in the cytoplasm. The enzyme catalyses (S)-malate = fumarate + H2O. It functions in the pathway carbohydrate metabolism; tricarboxylic acid cycle; (S)-malate from fumarate: step 1/1. Its function is as follows. Involved in the TCA cycle. Catalyzes the stereospecific interconversion of fumarate to L-malate. The sequence is that of Fumarate hydratase class II from Thermus aquaticus.